The primary structure comprises 129 residues: UPF0102 protein RD1_1191 (129 aa).

This sequence belongs to the UPF0102 family.

The protein is UPF0102 protein RD1_1191 of Roseobacter denitrificans (strain ATCC 33942 / OCh 114) (Erythrobacter sp. (strain OCh 114)).